A 181-amino-acid chain; its full sequence is Regulator of G-protein signaling 5 (181 aa).

The RGS domain maps to 64 to 180; sequence SLDKLLQNNY…VRSEFYQEFI (117 aa).

Its subcellular location is the cytoplasm. The protein localises to the membrane. Functionally, inhibits signal transduction by increasing the GTPase activity of G protein alpha subunits thereby driving them into their inactive GDP-bound form. Binds to G(i)-alpha and G(o)-alpha, but not to G(s)-alpha. The protein is Regulator of G-protein signaling 5 (RGS5) of Sus scrofa (Pig).